The primary structure comprises 118 residues: Small ribosomal subunit protein uS13 (118 aa).

This sequence belongs to the universal ribosomal protein uS13 family. As to quaternary structure, part of the 30S ribosomal subunit. Forms a loose heterodimer with protein S19. Forms two bridges to the 50S subunit in the 70S ribosome.

Its function is as follows. Located at the top of the head of the 30S subunit, it contacts several helices of the 16S rRNA. In the 70S ribosome it contacts the 23S rRNA (bridge B1a) and protein L5 of the 50S subunit (bridge B1b), connecting the 2 subunits; these bridges are implicated in subunit movement. Contacts the tRNAs in the A and P-sites. This chain is Small ribosomal subunit protein uS13, found in Carsonella ruddii (strain PV).